A 138-amino-acid polypeptide reads, in one-letter code: Fluoride-specific ion channel FluC (138 aa).

The next 4 helical transmembrane spans lie at 34–54 (FMPK…GACA), 60–80 (MQFG…SFLM), 88–108 (FWGT…VVLV), and 112–132 (LPHA…AWLM). Na(+) is bound by residues G95 and T98.

It belongs to the fluoride channel Fluc/FEX (TC 1.A.43) family.

It localises to the cell membrane. The catalysed reaction is fluoride(in) = fluoride(out). Its activity is regulated as follows. Na(+) is not transported, but it plays an essential structural role and its presence is essential for fluoride channel function. Functionally, fluoride-specific ion channel. Important for reducing fluoride concentration in the cell, thus reducing its toxicity. This is Fluoride-specific ion channel FluC from Corynebacterium efficiens (strain DSM 44549 / YS-314 / AJ 12310 / JCM 11189 / NBRC 100395).